Consider the following 72-residue polypeptide: Beta-defensin 104 (72 aa).

Positions M1–S22 are cleaved as a signal peptide. 3 disulfide bridges follow: C30/C57, C37/C51, and C41/C58.

The protein belongs to the beta-defensin family. In terms of tissue distribution, high expression in the testis. Gastric antrum exhibited relatively high levels. A lower expression is observed in uterus and neutrophils thyroid gland, lung, and kidney. No detectable expression in other tissues tested.

It is found in the secreted. Its function is as follows. Has antimicrobial activity. Synergistic effects with lysozyme and DEFB103. The chain is Beta-defensin 104 (DEFB104A) from Homo sapiens (Human).